Consider the following 153-residue polypeptide: Ubiquitin-conjugating enzyme E2 ubc-18 (153 aa).

In terms of domain architecture, UBC core spans 2-149; it reads SATRRLQKEL…AEEHTRKHAE (148 aa). Cysteine 86 serves as the catalytic Glycyl thioester intermediate.

Belongs to the ubiquitin-conjugating enzyme family. In terms of assembly, interacts with E3 ubiquitin-protein ligase wwp-1. Interacts with RBR-type E3 ubiquitin transferase ari-1.1. As to expression, expressed in neurons localized in the head and tail of adults.

It catalyses the reaction S-ubiquitinyl-[E1 ubiquitin-activating enzyme]-L-cysteine + [E2 ubiquitin-conjugating enzyme]-L-cysteine = [E1 ubiquitin-activating enzyme]-L-cysteine + S-ubiquitinyl-[E2 ubiquitin-conjugating enzyme]-L-cysteine.. Ubiquitin-conjugating enzyme E2. Accepts ubiquitin from the E1 complex and catalyzes its covalent attachment to other proteins. Required for diet restriction-mediated lifespan extension, probably acting as part of a complex with ubiquitin-protein ligase wwp-1. Acts redundantly with lin-35/Rb in the regulation of pharyngeal morphogenesis during embryonic development by negatively regulating the expression of proteins such as sup-35. This is Ubiquitin-conjugating enzyme E2 ubc-18 from Caenorhabditis elegans.